A 115-amino-acid polypeptide reads, in one-letter code: U3-lycotoxin-Ls1e (115 aa).

Residues 1 to 20 (MKFVLLFGVLSLTLFSYSSA) form the signal peptide. Positions 21 to 44 (EMLDDFDQADEDELLSLIEKEEAR) are excised as a propeptide. 4 disulfide bridges follow: Cys-48-Cys-63, Cys-55-Cys-72, Cys-62-Cys-87, and Cys-74-Cys-85.

Belongs to the neurotoxin 19 (CSTX) family. 01 subfamily. In terms of tissue distribution, expressed by the venom gland.

The protein resides in the secreted. In Lycosa singoriensis (Wolf spider), this protein is U3-lycotoxin-Ls1e.